Reading from the N-terminus, the 80-residue chain is RNA-binding protein Hfq (80 aa).

The region spanning 10-70 (DLFLNTVRKQ…ISTIMPGQPM (61 aa)) is the Sm domain.

This sequence belongs to the Hfq family. Homohexamer.

Functionally, RNA chaperone that binds small regulatory RNA (sRNAs) and mRNAs to facilitate mRNA translational regulation in response to envelope stress, environmental stress and changes in metabolite concentrations. Also binds with high specificity to tRNAs. This is RNA-binding protein Hfq from Rhizobium rhizogenes (strain K84 / ATCC BAA-868) (Agrobacterium radiobacter).